A 102-amino-acid polypeptide reads, in one-letter code: NADH-quinone oxidoreductase subunit K (102 aa).

The next 3 membrane-spanning stretches (helical) occupy residues 5-25 (IAHY…GIFL), 31-51 (IVIL…FVAF), and 66-86 (FVLT…VVFF).

The protein belongs to the complex I subunit 4L family. In terms of assembly, NDH-1 is composed of 14 different subunits. Subunits NuoA, H, J, K, L, M, N constitute the membrane sector of the complex.

It localises to the cell inner membrane. The catalysed reaction is a quinone + NADH + 5 H(+)(in) = a quinol + NAD(+) + 4 H(+)(out). Its function is as follows. NDH-1 shuttles electrons from NADH, via FMN and iron-sulfur (Fe-S) centers, to quinones in the respiratory chain. The immediate electron acceptor for the enzyme in this species is believed to be ubiquinone. Couples the redox reaction to proton translocation (for every two electrons transferred, four hydrogen ions are translocated across the cytoplasmic membrane), and thus conserves the redox energy in a proton gradient. The chain is NADH-quinone oxidoreductase subunit K from Brucella abortus (strain S19).